We begin with the raw amino-acid sequence, 466 residues long: MMADLMRIEHDSMGTIEVPAGVLWGAQTQRSLLNFAISTDRMPVELIHALALIKQAAASVNCRLGVLDEVQRDQIIKAASAVASGLHDDQFPLRVWQTGSGTHTNMNVNEVISNLASQANDEPLGSHRPVHPNDHVNRSQSTNDAFPTAIHIAAVQGITNNLLPELEQLIAAFARKSDAWSDIIKIGRTHLQDAVPLTLGQEASAWRDQIASAHSRIQSSLIELYPLPLGGTAVGTGLNAPARFGQETAAQLASITGLPFSSAKNKFAVMASHDGLVNAMAQLRMLAVALFKISNDLRLLACGPRAGLAELHLPENEPGSSIMPGKVNPSQCEAMAMVCLQVIGLDSAVTMAGGSGHLQMNVYKPLIGFNLLHSIELLHDACRKYRLAMVQGIEPNRIKIQHDLEQSLMLVTALAPEIGYDKASEIAHLAHEKGFSLREAALKLGYVSKEDFDRIVNPALMTSARL.

Substrate is bound by residues 100 to 102 (SGT), Arg-128, 131 to 134 (HPND), 141 to 143 (STN), and Thr-189. The Proton donor/acceptor role is filled by His-190. The active site involves Ser-320. Substrate-binding positions include Ser-321 and 326–328 (KVN).

This sequence belongs to the class-II fumarase/aspartase family. Fumarase subfamily. As to quaternary structure, homotetramer.

The protein localises to the cytoplasm. It carries out the reaction (S)-malate = fumarate + H2O. It functions in the pathway carbohydrate metabolism; tricarboxylic acid cycle; (S)-malate from fumarate: step 1/1. Involved in the TCA cycle. Catalyzes the stereospecific interconversion of fumarate to L-malate. The sequence is that of Fumarate hydratase class II from Prochlorococcus marinus (strain MIT 9313).